We begin with the raw amino-acid sequence, 502 residues long: Probable cytosol aminopeptidase (502 aa).

Mn(2+)-binding residues include lysine 269 and aspartate 274. Lysine 281 is an active-site residue. Mn(2+) contacts are provided by aspartate 292, aspartate 351, and glutamate 353. Arginine 355 is a catalytic residue.

Belongs to the peptidase M17 family. Requires Mn(2+) as cofactor.

The protein resides in the cytoplasm. It catalyses the reaction Release of an N-terminal amino acid, Xaa-|-Yaa-, in which Xaa is preferably Leu, but may be other amino acids including Pro although not Arg or Lys, and Yaa may be Pro. Amino acid amides and methyl esters are also readily hydrolyzed, but rates on arylamides are exceedingly low.. The enzyme catalyses Release of an N-terminal amino acid, preferentially leucine, but not glutamic or aspartic acids.. Presumably involved in the processing and regular turnover of intracellular proteins. Catalyzes the removal of unsubstituted N-terminal amino acids from various peptides. The protein is Probable cytosol aminopeptidase of Vibrio campbellii (strain ATCC BAA-1116).